Consider the following 508-residue polypeptide: Lysine-specific permease LysP (508 aa).

The next 12 membrane-spanning stretches (helical) occupy residues 43 to 63 (SMIALGGTIGTGLFLTSGDVI), 66 to 86 (AGPFGALTAYVLIGAMVYFLM), 112 to 132 (PAFGFALGWNYWLNWAITVAV), 144 to 164 (WLPDVPSWIFSLIALIIVFSI), 184 to 204 (ITVVVLFLIIGFLSIFGIMGG), 219 to 239 (FVGGLGSFTTGGGILGVLLVA), 270 to 290 (IFWRILVFYILSIFVMAAIIP), 314 to 334 (VGFSIAASIMNAVVLTSVVSA), 367 to 387 (IPFIALLATTAVALLTFLTSI), 393 to 413 (FTLLVSASGLTGFIAWIGIAI), 436 to 456 (AKLFPFGPILALIMTVLVTLG), and 467 to 487 (WVQGVVMYAAIPLFFILYLGY).

The protein belongs to the amino acid-polyamine-organocation (APC) superfamily. Amino acid transporter (AAT) (TC 2.A.3.1) family.

The protein localises to the cell membrane. It catalyses the reaction L-lysine(out) + H(+)(out) = L-lysine(in) + H(+)(in). Permease involved in lysine uptake. In Lactococcus lactis subsp. cremoris (strain MG1363), this protein is Lysine-specific permease LysP.